Reading from the N-terminus, the 628-residue chain is Biosynthetic arginine decarboxylase (628 aa).

Lys-99 bears the N6-(pyridoxal phosphate)lysine mark. Position 279–289 (279–289 (VDVGGGLGIDY)) interacts with substrate.

It belongs to the Orn/Lys/Arg decarboxylase class-II family. SpeA subfamily. Requires Mg(2+) as cofactor. Pyridoxal 5'-phosphate is required as a cofactor.

It catalyses the reaction L-arginine + H(+) = agmatine + CO2. Catalyzes the biosynthesis of agmatine from arginine. The protein is Biosynthetic arginine decarboxylase of Xanthomonas campestris pv. campestris (strain ATCC 33913 / DSM 3586 / NCPPB 528 / LMG 568 / P 25).